The sequence spans 287 residues: MKRIFLLIATNLAVLLVASIVMSILGVNTSTMGGLLVFAAIFGFGGAFISLAISKWMAKKAMGCEVITMPRDGTERWLVETVARQAQQAGIKMPEVAIYQSPEMNAFATGPSKDNSLVAVSTGLLYGMSQDEVEAVLAHEVSHVANGDMVTLTLIQGVVNTFVIFAARVVAGIINNVVSSNDEEGEGLGMFAYMAVVFVLDMLFGILASIIVAYFSRIREYRADEGAARLAGKHKMIAALERLRQGPESTAMPAQMSAFGINGKRSMAEMMMSHPPLEKRIAALQAR.

The next 2 helical transmembrane spans lie at 4-24 (IFLL…VMSI) and 33-53 (GGLL…SLAI). A Zn(2+)-binding site is contributed by histidine 139. Glutamate 140 is an active-site residue. Histidine 143 provides a ligand contact to Zn(2+). 2 helical membrane-spanning segments follow: residues 154-174 (LIQG…AGII) and 195-215 (AVVF…VAYF). Glutamate 220 is a Zn(2+) binding site.

The protein belongs to the peptidase M48B family. The cofactor is Zn(2+).

Its subcellular location is the cell inner membrane. This Shewanella putrefaciens (strain CN-32 / ATCC BAA-453) protein is Protease HtpX.